The chain runs to 151 residues: 3-dehydroquinate dehydratase (151 aa).

Residue Y24 is the Proton acceptor of the active site. Substrate is bound by residues N76, H82, and D89. H102 acts as the Proton donor in catalysis. Residues 103-104 (LS) and R113 each bind substrate.

This sequence belongs to the type-II 3-dehydroquinase family. As to quaternary structure, homododecamer.

It catalyses the reaction 3-dehydroquinate = 3-dehydroshikimate + H2O. Its pathway is metabolic intermediate biosynthesis; chorismate biosynthesis; chorismate from D-erythrose 4-phosphate and phosphoenolpyruvate: step 3/7. Catalyzes a trans-dehydration via an enolate intermediate. The protein is 3-dehydroquinate dehydratase of Acinetobacter baumannii (strain ATCC 17978 / DSM 105126 / CIP 53.77 / LMG 1025 / NCDC KC755 / 5377).